A 123-amino-acid polypeptide reads, in one-letter code: Ribosome-binding factor A (123 aa).

The protein belongs to the RbfA family. As to quaternary structure, monomer. Binds 30S ribosomal subunits, but not 50S ribosomal subunits or 70S ribosomes.

The protein resides in the cytoplasm. In terms of biological role, one of several proteins that assist in the late maturation steps of the functional core of the 30S ribosomal subunit. Associates with free 30S ribosomal subunits (but not with 30S subunits that are part of 70S ribosomes or polysomes). Required for efficient processing of 16S rRNA. May interact with the 5'-terminal helix region of 16S rRNA. The chain is Ribosome-binding factor A from Lactobacillus gasseri (strain ATCC 33323 / DSM 20243 / BCRC 14619 / CIP 102991 / JCM 1131 / KCTC 3163 / NCIMB 11718 / NCTC 13722 / AM63).